Reading from the N-terminus, the 421-residue chain is 2',3'-cyclic-nucleotide 3'-phosphodiesterase (421 aa).

A phosphoserine mark is found at Ser-6 and Ser-9. At Tyr-110 the chain carries Phosphotyrosine. A Phosphoserine modification is found at Ser-170. Residue His-251 is the Proton acceptor of the active site. Thr-253 contacts substrate. Catalysis depends on His-330, which acts as the Proton donor. Thr-332 contributes to the substrate binding site. Ser-359 bears the Phosphoserine mark. Residue Cys-418 is modified to Cysteine methyl ester. Residue Cys-418 is the site of S-farnesyl cysteine attachment. Positions 419–421 (TII) are cleaved as a propeptide — removed in mature form.

It belongs to the 2H phosphoesterase superfamily. CNPase family. Exists as monomers and homodimers.

Its subcellular location is the membrane. It localises to the melanosome. The enzyme catalyses a nucleoside 2',3'-cyclic phosphate + H2O = a nucleoside 2'-phosphate + H(+). Catalyzes the formation of 2'-nucleotide products from 2',3'-cyclic substrates. May participate in RNA metabolism in the myelinating cell, CNP is the third most abundant protein in central nervous system myelin. The chain is 2',3'-cyclic-nucleotide 3'-phosphodiesterase from Pongo abelii (Sumatran orangutan).